The following is a 353-amino-acid chain: 41 kDa protein (353 aa).

The disordered stretch occupies residues 132-197 (QSSHASALEQ…DNNSSDTIKD (66 aa)). A compositionally biased stretch (basic and acidic residues) spans 157–169 (LDNKGKSDSENCN).

The chain is 41 kDa protein from Lactobacillus helveticus (Lactobacillus suntoryeus).